The sequence spans 241 residues: Small ribosomal subunit protein uS5 (241 aa).

Positions Met-1–Asn-53 are disordered. The segment covering Ala-11–Glu-22 has biased composition (low complexity). The span at Asn-25–Asn-53 shows a compositional bias: basic and acidic residues. Residues Met-55–Val-118 enclose the S5 DRBM domain.

It belongs to the universal ribosomal protein uS5 family. As to quaternary structure, part of the 30S ribosomal subunit. Contacts proteins S4 and S8.

With S4 and S12 plays an important role in translational accuracy. Functionally, located at the back of the 30S subunit body where it stabilizes the conformation of the head with respect to the body. The protein is Small ribosomal subunit protein uS5 of Bifidobacterium adolescentis (strain ATCC 15703 / DSM 20083 / NCTC 11814 / E194a).